A 462-amino-acid polypeptide reads, in one-letter code: GTPase HflX (462 aa).

The Hflx-type G domain maps to 255–452; the sequence is PAVGIVGYTN…LLEEKIYNLP (198 aa). Residues 261–268, 286–290, 308–311, 374–377, and 430–432 each bind GTP; these read GYTNAGKS, FATLD, DTVG, NKID, and SAY. Residues Ser-268 and Thr-288 each coordinate Mg(2+).

Belongs to the TRAFAC class OBG-HflX-like GTPase superfamily. HflX GTPase family. As to quaternary structure, monomer. Associates with the 50S ribosomal subunit. Mg(2+) is required as a cofactor.

The protein resides in the cytoplasm. Its function is as follows. GTPase that associates with the 50S ribosomal subunit and may have a role during protein synthesis or ribosome biogenesis. In Leptospira borgpetersenii serovar Hardjo-bovis (strain JB197), this protein is GTPase HflX.